A 292-amino-acid polypeptide reads, in one-letter code: Hemin import ATP-binding protein HmuV (292 aa).

One can recognise an ABC transporter domain in the interval 38–271; it reads LRADGIAVTR…ELLTRVYGHP (234 aa). 70-77 contacts ATP; sequence GPNGAGKS.

Belongs to the ABC transporter superfamily. Heme (hemin) importer (TC 3.A.1.14.5) family. As to quaternary structure, the complex is composed of two ATP-binding proteins (HmuV), two transmembrane proteins (HmuU) and a solute-binding protein (HmuT).

It localises to the cell membrane. Functionally, part of the ABC transporter complex HmuTUV involved in hemin import. Responsible for energy coupling to the transport system. The polypeptide is Hemin import ATP-binding protein HmuV (Rhodococcus jostii (strain RHA1)).